Reading from the N-terminus, the 757-residue chain is Polyribonucleotide nucleotidyltransferase (757 aa).

Residues Asp525 and Asp531 each contribute to the Mg(2+) site. The KH domain occupies 591–650 (PRVISVNIPVDKIGELIGPKGKTINAIQDETGADISIEEDGAVYIGAVDGPSAEAARAQV). The S1 motif domain maps to 662 to 734 (GESFLGTVVK…DRGKLSLAPV (73 aa)). The tract at residues 736–757 (EEAADQEGSAAASDGPEAPAEG) is disordered.

It belongs to the polyribonucleotide nucleotidyltransferase family. Mg(2+) is required as a cofactor.

It localises to the cytoplasm. It carries out the reaction RNA(n+1) + phosphate = RNA(n) + a ribonucleoside 5'-diphosphate. Functionally, involved in mRNA degradation. Catalyzes the phosphorolysis of single-stranded polyribonucleotides processively in the 3'- to 5'-direction. In Clavibacter sepedonicus (Clavibacter michiganensis subsp. sepedonicus), this protein is Polyribonucleotide nucleotidyltransferase.